The primary structure comprises 431 residues: D-inositol 3-phosphate glycosyltransferase (431 aa).

His14 is a 1D-myo-inositol 3-phosphate binding site. Residues Gln20–Pro21 and Gly28 contribute to the UDP-N-acetyl-alpha-D-glucosamine site. Residues Asp25 to Asn30, Lys83, Tyr116, Thr140, and Arg160 contribute to the 1D-myo-inositol 3-phosphate site. 2 residues coordinate UDP-N-acetyl-alpha-D-glucosamine: Arg240 and Lys245. Tyr315, Arg316, and Ala318 together coordinate Mg(2+). Residues Glu328 and Glu336 each contribute to the UDP-N-acetyl-alpha-D-glucosamine site. Thr342 contributes to the Mg(2+) binding site.

Belongs to the glycosyltransferase group 1 family. MshA subfamily. As to quaternary structure, homodimer.

It carries out the reaction 1D-myo-inositol 3-phosphate + UDP-N-acetyl-alpha-D-glucosamine = 1D-myo-inositol 2-acetamido-2-deoxy-alpha-D-glucopyranoside 3-phosphate + UDP + H(+). Functionally, catalyzes the transfer of a N-acetyl-glucosamine moiety to 1D-myo-inositol 3-phosphate to produce 1D-myo-inositol 2-acetamido-2-deoxy-glucopyranoside 3-phosphate in the mycothiol biosynthesis pathway. The chain is D-inositol 3-phosphate glycosyltransferase from Thermomonospora curvata (strain ATCC 19995 / DSM 43183 / JCM 3096 / KCTC 9072 / NBRC 15933 / NCIMB 10081 / Henssen B9).